A 319-amino-acid chain; its full sequence is tRNA-cytidine(32) 2-sulfurtransferase (319 aa).

The PP-loop motif signature appears at 49-54 (SGGKDS). [4Fe-4S] cluster contacts are provided by C124, C127, and C215.

This sequence belongs to the TtcA family. In terms of assembly, homodimer. The cofactor is Mg(2+). [4Fe-4S] cluster serves as cofactor.

The protein localises to the cytoplasm. It carries out the reaction cytidine(32) in tRNA + S-sulfanyl-L-cysteinyl-[cysteine desulfurase] + AH2 + ATP = 2-thiocytidine(32) in tRNA + L-cysteinyl-[cysteine desulfurase] + A + AMP + diphosphate + H(+). It functions in the pathway tRNA modification. Its function is as follows. Catalyzes the ATP-dependent 2-thiolation of cytidine in position 32 of tRNA, to form 2-thiocytidine (s(2)C32). The sulfur atoms are provided by the cysteine/cysteine desulfurase (IscS) system. This chain is tRNA-cytidine(32) 2-sulfurtransferase, found in Shewanella amazonensis (strain ATCC BAA-1098 / SB2B).